The chain runs to 214 residues: Small ribosomal subunit protein uS5 (214 aa).

In terms of domain architecture, S5 DRBM spans 54–117 (LKYEVMDIKI…KNAKMNIIPV (64 aa)).

Belongs to the universal ribosomal protein uS5 family. As to quaternary structure, part of the 30S ribosomal subunit. Contacts protein S4.

Functionally, with S4 and S12 plays an important role in translational accuracy. The protein is Small ribosomal subunit protein uS5 of Sulfurisphaera tokodaii (strain DSM 16993 / JCM 10545 / NBRC 100140 / 7) (Sulfolobus tokodaii).